Consider the following 249-residue polypeptide: ATP synthase subunit a, chloroplastic (249 aa).

5 helical membrane-spanning segments follow: residues 40–60 (QVLITSWVVIAILLGSAVLAI), 97–117 (VPFIGTLFLFIFVSNWSGALL), 136–156 (INTTVALALLTSVAYFYAGLS), 201–221 (LVVVVLVSLVPLVVPIPVMFL), and 222–242 (GLFTSGIQALIFATLAAAYIG).

It belongs to the ATPase A chain family. In terms of assembly, F-type ATPases have 2 components, CF(1) - the catalytic core - and CF(0) - the membrane proton channel. CF(1) has five subunits: alpha(3), beta(3), gamma(1), delta(1), epsilon(1). CF(0) has four main subunits: a, b, b' and c.

The protein resides in the plastid. It is found in the chloroplast thylakoid membrane. In terms of biological role, key component of the proton channel; it plays a direct role in the translocation of protons across the membrane. In Lepidium virginicum (Virginia pepperweed), this protein is ATP synthase subunit a, chloroplastic.